A 982-amino-acid chain; its full sequence is E3 ubiquitin-protein ligase CBL-B (982 aa).

Residues 35 to 167 (PPKQAAADRR…KAIFPNGQFQ (133 aa)) form a 4H region. A Cbl-PTB domain is found at 35-343 (PPKQAAADRR…GRSYNPDLTG (309 aa)). The segment at 168–240 (GDNFRITKAD…FEFDIFTRLF (73 aa)) is EF-hand-like. Ca(2+) contacts are provided by aspartate 221, threonine 223, asparagine 225, tyrosine 227, and glutamate 232. The interval 241-343 (QPWGSILRNW…GRSYNPDLTG (103 aa)) is SH2-like. Residue serine 282 is modified to Phosphoserine; by PKC/PRKCQ. Position 286 (arginine 286) interacts with 4-O-phospho-L-tyrosine. The interval 344 to 372 (LCEPTPHDHIKVTQEQYELYCEMGSTFQL) is linker. Tyrosine 363 is modified (phosphotyrosine). The RING-type zinc finger occupies 373–412 (CKICAENDKDVKIEPCGHLMCTSCLTAWQESDGQGCPFCR). The interval 466-571 (NVRKCTDRQN…PPPIPPDNRL (106 aa)) is disordered. Polar residues predominate over residues 473–486 (RQNSPVTSPGSSPL). Residues serine 476, serine 480, serine 484, serine 521, serine 525, and serine 529 each carry the phosphoserine modification. Residues 543–568 (PLPAPPPPLRDPPPPPPERPPPIPPD) are interaction with VAV1. Over residues 544–567 (LPAPPPPLRDPPPPPPERPPPIPP) the composition is skewed to pro residues. Phosphoserine is present on serine 634. Phosphotyrosine is present on residues tyrosine 665 and tyrosine 709. Disordered regions lie at residues 688–731 (GPLA…NVKP) and 769–929 (FDSA…EAAL). A compositionally biased stretch (polar residues) spans 715–725 (HPVSLNSQPSH). The span at 819 to 828 (PSLPPPPPPA) shows a compositional bias: pro residues. Residues 838–848 (PPGSSSRPSSG) show a composition bias toward low complexity. Residues 880–899 (VKTNRTSQDYDQLPSCSDGS) are compositionally biased toward polar residues. Residue tyrosine 889 is modified to Phosphotyrosine. Residues 891–927 (QLPSCSDGSQAPARPPKPRPRRTAPEIHHRKPHGPEA) are interaction with SH3KBP1. Over residues 906–922 (PKPRPRRTAPEIHHRKP) the composition is skewed to basic residues. Residues 931–970 (NVDAKIAKLMGEGYAFEEVKRALEIAQNNVEVARSILREF) form the UBA domain.

In terms of assembly, interacts with SH3 domain-containing proteins LCK, CRK and SORBS1. Interacts with LCP2 and ZAP70. Interacts with CBL. Interacts with SH3 domain-containing proteins VAV1, FYN, FGR, PLCG1, GRB2, CRKL, PIK3R1 and SH3KBP1/CIN85. Identified in heterotrimeric complexes with SH3KBP1/CIN85, CD2AP and ARHGEF7, where one CBLB peptide binds two copies of the other protein. Interacts with poly-ubiquitinated proteins. Dimerization is required for the binding of poly-ubiquitin, but not for the binding of mono-ubiquitin. Interacts with EGFR (phosphorylated). Interacts with IFT20. In terms of processing, phosphorylated on tyrosine and serine residues upon TCR or BCR activation, and upon various types of cell stimulation. Auto-ubiquitinated upon EGF-mediated cell activation or upon T-cell costimulation by CD28; which promotes proteasomal degradation. In terms of tissue distribution, expressed in placenta, heart, lung, kidney, spleen, ovary and testis, as well as fetal brain and liver and hematopoietic cell lines, but not in adult brain, liver, pancreas, salivary gland, or skeletal muscle. Present in lymphocytes (at protein level).

Its subcellular location is the cytoplasm. It carries out the reaction S-ubiquitinyl-[E2 ubiquitin-conjugating enzyme]-L-cysteine + [acceptor protein]-L-lysine = [E2 ubiquitin-conjugating enzyme]-L-cysteine + N(6)-ubiquitinyl-[acceptor protein]-L-lysine.. Its pathway is protein modification; protein ubiquitination. Functionally, E3 ubiquitin-protein ligase which accepts ubiquitin from specific E2 ubiquitin-conjugating enzymes, and transfers it to substrates, generally promoting their degradation by the proteasome. Negatively regulates TCR (T-cell receptor), BCR (B-cell receptor) and FCER1 (high affinity immunoglobulin epsilon receptor) signal transduction pathways. In naive T-cells, inhibits VAV1 activation upon TCR engagement and imposes a requirement for CD28 costimulation for proliferation and IL-2 production. Also acts by promoting PIK3R1/p85 ubiquitination, which impairs its recruitment to the TCR and subsequent activation. In activated T-cells, inhibits PLCG1 activation and calcium mobilization upon restimulation and promotes anergy. In B-cells, acts by ubiquitinating SYK and promoting its proteasomal degradation. Slightly promotes SRC ubiquitination. May be involved in EGFR ubiquitination and internalization. May be functionally coupled with the E2 ubiquitin-protein ligase UB2D3. In association with CBL, required for proper feedback inhibition of ciliary platelet-derived growth factor receptor-alpha (PDGFRA) signaling pathway via ubiquitination and internalization of PDGFRA. In Homo sapiens (Human), this protein is E3 ubiquitin-protein ligase CBL-B (CBLB).